The chain runs to 199 residues: ATP-dependent Clp protease proteolytic subunit 2 (199 aa).

Ser-95 serves as the catalytic Nucleophile. Residue His-120 is part of the active site.

The protein belongs to the peptidase S14 family. Fourteen ClpP subunits assemble into 2 heptameric rings which stack back to back to give a disk-like structure with a central cavity, resembling the structure of eukaryotic proteasomes.

The protein localises to the cytoplasm. It carries out the reaction Hydrolysis of proteins to small peptides in the presence of ATP and magnesium. alpha-casein is the usual test substrate. In the absence of ATP, only oligopeptides shorter than five residues are hydrolyzed (such as succinyl-Leu-Tyr-|-NHMec, and Leu-Tyr-Leu-|-Tyr-Trp, in which cleavage of the -Tyr-|-Leu- and -Tyr-|-Trp bonds also occurs).. Functionally, cleaves peptides in various proteins in a process that requires ATP hydrolysis. Has a chymotrypsin-like activity. Plays a major role in the degradation of misfolded proteins. The chain is ATP-dependent Clp protease proteolytic subunit 2 from Mycolicibacterium paratuberculosis (strain ATCC BAA-968 / K-10) (Mycobacterium paratuberculosis).